The sequence spans 209 residues: Uracil phosphoribosyltransferase (209 aa).

5-phospho-alpha-D-ribose 1-diphosphate is bound by residues Arg79, Arg104, and 131–139; that span reads DPMLATGNS. Uracil-binding positions include Ile194 and 199–201; that span reads GDA. Asp200 serves as a coordination point for 5-phospho-alpha-D-ribose 1-diphosphate.

Belongs to the UPRTase family. It depends on Mg(2+) as a cofactor.

The catalysed reaction is UMP + diphosphate = 5-phospho-alpha-D-ribose 1-diphosphate + uracil. Its pathway is pyrimidine metabolism; UMP biosynthesis via salvage pathway; UMP from uracil: step 1/1. Allosterically activated by GTP. Functionally, catalyzes the conversion of uracil and 5-phospho-alpha-D-ribose 1-diphosphate (PRPP) to UMP and diphosphate. In Polaromonas naphthalenivorans (strain CJ2), this protein is Uracil phosphoribosyltransferase.